Here is a 77-residue protein sequence, read N- to C-terminus: UPF0346 protein lin1971 (77 aa).

It belongs to the UPF0346 family.

The sequence is that of UPF0346 protein lin1971 from Listeria innocua serovar 6a (strain ATCC BAA-680 / CLIP 11262).